Here is a 187-residue protein sequence, read N- to C-terminus: Inner membrane-spanning protein YciB (187 aa).

5 helical membrane passes run 25 to 45 (ATGA…ALYK), 50 to 70 (MQLI…FLHD), 76 to 96 (WKVT…HVMG), 118 to 138 (INWA…YVAY), and 148 to 168 (FKVF…GGYI).

Belongs to the YciB family.

The protein localises to the cell inner membrane. In terms of biological role, plays a role in cell envelope biogenesis, maintenance of cell envelope integrity and membrane homeostasis. In Vibrio vulnificus (strain CMCP6), this protein is Inner membrane-spanning protein YciB.